We begin with the raw amino-acid sequence, 136 residues long: uncharacterized protein (136 aa).

Widely expressed.

This is an uncharacterized protein from Homo sapiens (Human).